Here is a 141-residue protein sequence, read N- to C-terminus: Large ribosomal subunit protein uL16 (141 aa).

Positions 1–21 (MLMPKRVKYRKQQRGHNRGMA) are disordered.

Belongs to the universal ribosomal protein uL16 family. Part of the 50S ribosomal subunit.

Its function is as follows. Binds 23S rRNA and is also seen to make contacts with the A and possibly P site tRNAs. In Roseiflexus sp. (strain RS-1), this protein is Large ribosomal subunit protein uL16.